A 31-amino-acid chain; its full sequence is Photosystem II reaction center protein M (31 aa).

The helical transmembrane segment at 5 to 25 threads the bilayer; sequence ILAFIATALLILVPTAFLLII.

This sequence belongs to the PsbM family. PSII is composed of 1 copy each of membrane proteins PsbA, PsbB, PsbC, PsbD, PsbE, PsbF, PsbH, PsbI, PsbJ, PsbK, PsbL, PsbM, PsbT, PsbX, PsbY, PsbZ, Psb30/Ycf12, at least 3 peripheral proteins of the oxygen-evolving complex and a large number of cofactors. It forms dimeric complexes.

The protein localises to the plastid membrane. Its function is as follows. One of the components of the core complex of photosystem II (PSII). PSII is a light-driven water:plastoquinone oxidoreductase that uses light energy to abstract electrons from H(2)O, generating O(2) and a proton gradient subsequently used for ATP formation. It consists of a core antenna complex that captures photons, and an electron transfer chain that converts photonic excitation into a charge separation. This subunit is found at the monomer-monomer interface. The sequence is that of Photosystem II reaction center protein M from Cuscuta reflexa (Southern Asian dodder).